The primary structure comprises 98 residues: Alpha-elicitin DRE-alpha (98 aa).

Cystine bridges form between Cys-3–Cys-71, Cys-27–Cys-56, and Cys-51–Cys-95.

It belongs to the elicitin family.

It localises to the secreted. In terms of biological role, induces local and distal defense responses (incompatible hypersensitive reaction) in plants from the solanaceae and cruciferae families. Elicits leaf necrosis and causes the accumulation of pathogenesis-related proteins. Might interact with the lipidic molecules of the plasma membrane. The sequence is that of Alpha-elicitin DRE-alpha from Phytophthora drechsleri.